The sequence spans 162 residues: Caveolin-2 (162 aa).

Over 1 to 86 the chain is Cytoplasmic; the sequence is MGLETEKADV…FEISKYVMYK (86 aa). Position 19 is a phosphotyrosine; by SRC (Y19). A phosphoserine mark is found at S20 and S23. Residue Y27 is modified to Phosphotyrosine; by SRC. At S36 the chain carries Phosphoserine. The helical intramembrane region spans 87–107; it reads FLTVFLSIPLAFLAGILFATL. Over 108–162 the chain is Cytoplasmic; the sequence is SCLHIWIIMPFVKTCLMVLPSVQTIWKSVTDAIIAPLCTSIGRSFSSVSLQLSHD.

This sequence belongs to the caveolin family. In terms of assembly, monomer or homodimer. Interacts with CAV1; the interaction forms a stable heterooligomeric complex that is required for targeting to lipid rafts and for caveolae formation. Tyrosine phosphorylated forms do not form heterooligomers with the Tyr-19-phosphorylated form existing as a monomer or dimer, and the Tyr-27-form as a monomer only. Interacts (tyrosine phosphorylated form) with the SH2 domain-containing proteins, RASA1, NCK1 and SRC. Interacts (tyrosine phosphorylated form) with INSR, the interaction (Tyr-27-phosphorylated form) is increased on insulin stimulation. Interacts (Tyr-19 phosphorylated form) with MAPK1 (phosphorylated form); the interaction, promoted by insulin, leads to nuclear location and MAPK1 activation. Interacts with STAT3; the interaction is increased on insulin-induced tyrosine phosphorylation leading to STAT activation. Post-translationally, phosphorylated on serine and tyrosine residues. CAV1 promotes phosphorylation on Ser-23 which then targets the complex to the plasma membrane, lipid rafts and caveolae. Phosphorylation on Ser-36 appears to modulate mitosis in endothelial cells. Phosphorylation on both Tyr-19 and Tyr-27 is required for insulin-induced 'Ser-727' phosphorylation of STAT3 and its activation. Phosphorylation on Tyr-19 is required for insulin-induced phosphorylation of MAPK1 and DNA binding of STAT3. Tyrosine phosphorylation is induced by both EGF and insulin (By. similarity).

The protein localises to the nucleus. Its subcellular location is the cytoplasm. It is found in the golgi apparatus membrane. It localises to the cell membrane. The protein resides in the membrane. The protein localises to the caveola. Functionally, may act as a scaffolding protein within caveolar membranes. Interacts directly with G-protein alpha subunits and can functionally regulate their activity. Acts as an accessory protein in conjunction with CAV1 in targeting to lipid rafts and driving caveolae formation. The Ser-36 phosphorylated form has a role in modulating mitosis in endothelial cells. Positive regulator of cellular mitogenesis of the MAPK signaling pathway. Required for the insulin-stimulated nuclear translocation and activation of MAPK1 and STAT3, and the subsequent regulation of cell cycle progression. In Saimiri boliviensis boliviensis (Bolivian squirrel monkey), this protein is Caveolin-2 (CAV2).